The primary structure comprises 880 residues: DNA polymerase I (880 aa).

In terms of domain architecture, 5'-3' exonuclease spans T174–R268. One can recognise a 3'-5' exonuclease domain in the interval D302–E470.

The protein belongs to the DNA polymerase type-A family. Single-chain monomer with multiple functions.

The catalysed reaction is DNA(n) + a 2'-deoxyribonucleoside 5'-triphosphate = DNA(n+1) + diphosphate. Functionally, in addition to polymerase activity, this DNA polymerase exhibits 3'-5' and 5'-3' exonuclease activity. This chain is DNA polymerase I (polA), found in Bacillus subtilis (strain 168).